Here is a 156-residue protein sequence, read N- to C-terminus: 6,7-dimethyl-8-ribityllumazine synthase (156 aa).

5-amino-6-(D-ribitylamino)uracil-binding positions include F22, 56-58 (ALE), and 80-82 (AVI). 85–86 (DT) contacts (2S)-2-hydroxy-3-oxobutyl phosphate. H88 (proton donor) is an active-site residue. F113 contacts 5-amino-6-(D-ribitylamino)uracil. (2S)-2-hydroxy-3-oxobutyl phosphate is bound at residue R127.

Belongs to the DMRL synthase family.

The enzyme catalyses (2S)-2-hydroxy-3-oxobutyl phosphate + 5-amino-6-(D-ribitylamino)uracil = 6,7-dimethyl-8-(1-D-ribityl)lumazine + phosphate + 2 H2O + H(+). Its pathway is cofactor biosynthesis; riboflavin biosynthesis; riboflavin from 2-hydroxy-3-oxobutyl phosphate and 5-amino-6-(D-ribitylamino)uracil: step 1/2. In terms of biological role, catalyzes the formation of 6,7-dimethyl-8-ribityllumazine by condensation of 5-amino-6-(D-ribitylamino)uracil with 3,4-dihydroxy-2-butanone 4-phosphate. This is the penultimate step in the biosynthesis of riboflavin. The chain is 6,7-dimethyl-8-ribityllumazine synthase from Leuconostoc mesenteroides subsp. mesenteroides (strain ATCC 8293 / DSM 20343 / BCRC 11652 / CCM 1803 / JCM 6124 / NCDO 523 / NBRC 100496 / NCIMB 8023 / NCTC 12954 / NRRL B-1118 / 37Y).